We begin with the raw amino-acid sequence, 259 residues long: MASPQGGQIAIAMRLRNQLQSVYKMDPLRNEEEVRVKIKDLNEHIVCCLCAGYFVDATTITECLHTFCKSCIVKYLQTSKYCPMCNIKIHETQPLLNLKLDRVMQDIVYKLVPGLQDSEEKRIREFYQSRGLDRVSQPSGEEPALSNLGLPFSSFDHSKAHYYRYDEQLSLCLERLSSGKDKNKNVLQNKYVRCSVRAEVRHLRRVLCHRLMLNPQHVQLLFDNEVLPDHMTMKQLWLSRWFGKPSPLLLQYSVKEKRR.

Ala-2 is modified (N-acetylalanine). A Phosphoserine modification is found at Ser-3. Lys-24 participates in a covalent cross-link: Glycyl lysine isopeptide (Lys-Gly) (interchain with G-Cter in SUMO2). The RING-type zinc-finger motif lies at 47–86; sequence CCLCAGYFVDATTITECLHTFCKSCIVKYLQTSKYCPMCN. The necessary for repressor activity stretch occupies residues 86–247; sequence NIKIHETQPL…LSRWFGKPSP (162 aa). Lys-88 is covalently cross-linked (Glycyl lysine isopeptide (Lys-Gly) (interchain with G-Cter in SUMO2)). Positions 150 to 255 are required for the interaction with the KDM2B-SKP1 heterodimeric complex; sequence LPFSSFDHSK…SPLLLQYSVK (106 aa). Residues 167–255 are RING-finger and WD40-associated ubiquitin-like domain (RAWUL); sufficient for interaction with BCOR and BCORL1; that stretch reads EQLSLCLERL…SPLLLQYSVK (89 aa).

In terms of assembly, interacts with BCORL1, forming heterodimers. The PCGF1-BCORL1 heterodimeric complex interacts with the KDM2B-SKP1 heterodimeric complex to form a homotetrameric polycomb repression complex 1 (PRC1.1). Component of the repressive BCOR complex containing a Polycomb group subcomplex at least composed of RYBP, RING1 and RNF2/RING2. Specifically interacts with BCOR, RING1 and RNF2/RING2. Component of a PRC1-like complex. Interacts with CBX6, CBX7 and CBX8. Interacts with DPPA4, NANOG, POU5F1 and RYBP.

The protein resides in the nucleus. Its function is as follows. Component of the Polycomb group (PcG) multiprotein BCOR complex, a complex required to maintain the transcriptionally repressive state of some genes, such as BCL6 and the cyclin-dependent kinase inhibitor, CDKN1A. Transcriptional repressor that may be targeted to the DNA by BCL6; this transcription repressor activity may be related to PKC signaling pathway. Represses CDKN1A expression by binding to its promoter, and this repression is dependent on the retinoic acid response element (RARE element). Promotes cell cycle progression and enhances cell proliferation as well. May have a positive role in tumor cell growth by down-regulating CDKN1A. Component of a Polycomb group (PcG) multiprotein PRC1-like complex, a complex class required to maintain the transcriptionally repressive state of many genes, including Hox genes, throughout development. PcG PRC1 complex acts via chromatin remodeling and modification of histones; it mediates monoubiquitination of histone H2A 'Lys-119', rendering chromatin heritably changed in its expressibility. Within the PRC1-like complex, regulates RNF2 ubiquitin ligase activity. Regulates the expression of DPPA4 and NANOG in the NT2 embryonic carcinoma cells. The polypeptide is Polycomb group RING finger protein 1 (Pcgf1) (Mus musculus (Mouse)).